Reading from the N-terminus, the 237-residue chain is Putative N-acetylmannosamine-6-phosphate 2-epimerase (237 aa).

It belongs to the NanE family.

It carries out the reaction an N-acyl-D-glucosamine 6-phosphate = an N-acyl-D-mannosamine 6-phosphate. It participates in amino-sugar metabolism; N-acetylneuraminate degradation; D-fructose 6-phosphate from N-acetylneuraminate: step 3/5. Functionally, converts N-acetylmannosamine-6-phosphate (ManNAc-6-P) to N-acetylglucosamine-6-phosphate (GlcNAc-6-P). The chain is Putative N-acetylmannosamine-6-phosphate 2-epimerase from Listeria monocytogenes serovar 1/2a (strain ATCC BAA-679 / EGD-e).